Consider the following 318-residue polypeptide: MITDLILHNHPRMKTITLNDNHIAHLNAKNTTKLEYLNLSNNNLLPTNDIDQLISSKHLWHVLVNGINNDPLAQMQYWTAVRNIIDDTNEVTIDLSGLNLTTQPPGLQNFTSINLDNNQFTHFDATNYDRLVKLSLNSNALESINFPQGRNVSITHISMNNNALRNIDIDRLSSVTYFSAAHNQLEFVQLESCEWLQYLNLSHNQLTDIVAGNKNELLLLDLSHNKLTSLHNDLFPNLNTLLINNNLLSEIKIFYSNFCNVQTLNAANNQLKYINLDFLTYLPSIKSLRLDNNKITHIDTNNTSDIGTLFPIIKQSKT.

9 LRR repeats span residues 109–129, 130–151, 153–173, 174–194, 195–216, 217–237, 238–258, 260–280, and 284–305; these read NFTSINLDNNQFTHFDATNYD, RLVKLSLNSNALESINFPQGRN, SITHISMNNNALRNIDIDRLS, SVTYFSAAHNQLEFVQLESCE, WLQYLNLSHNQLTDIVAGNKNE, LLLLDLSHNKLTSLHNDLFPN, LNTLLINNNLLSEIKIFYSNF, NVQTLNAANNQLKYINLDFLT, and SIKSLRLDNNKITHIDTNNTSD.

The protein is Leucine-rich repeat domain-containing protein YddK (yddK) of Escherichia coli (strain K12).